The sequence spans 155 residues: SsrA-binding protein (155 aa).

It belongs to the SmpB family.

The protein resides in the cytoplasm. Its function is as follows. Required for rescue of stalled ribosomes mediated by trans-translation. Binds to transfer-messenger RNA (tmRNA), required for stable association of tmRNA with ribosomes. tmRNA and SmpB together mimic tRNA shape, replacing the anticodon stem-loop with SmpB. tmRNA is encoded by the ssrA gene; the 2 termini fold to resemble tRNA(Ala) and it encodes a 'tag peptide', a short internal open reading frame. During trans-translation Ala-aminoacylated tmRNA acts like a tRNA, entering the A-site of stalled ribosomes, displacing the stalled mRNA. The ribosome then switches to translate the ORF on the tmRNA; the nascent peptide is terminated with the 'tag peptide' encoded by the tmRNA and targeted for degradation. The ribosome is freed to recommence translation, which seems to be the essential function of trans-translation. This Lactococcus lactis subsp. lactis (strain IL1403) (Streptococcus lactis) protein is SsrA-binding protein.